The sequence spans 137 residues: Nucleoside diphosphate kinase (137 aa).

ATP is bound by residues K9, F57, R85, T91, R102, and N112. Residue H115 is the Pros-phosphohistidine intermediate of the active site.

It belongs to the NDK family. In terms of assembly, homotetramer. Requires Mg(2+) as cofactor.

The protein resides in the cytoplasm. It catalyses the reaction a 2'-deoxyribonucleoside 5'-diphosphate + ATP = a 2'-deoxyribonucleoside 5'-triphosphate + ADP. The catalysed reaction is a ribonucleoside 5'-diphosphate + ATP = a ribonucleoside 5'-triphosphate + ADP. Functionally, major role in the synthesis of nucleoside triphosphates other than ATP. The ATP gamma phosphate is transferred to the NDP beta phosphate via a ping-pong mechanism, using a phosphorylated active-site intermediate. The polypeptide is Nucleoside diphosphate kinase (Aliarcobacter butzleri (strain RM4018) (Arcobacter butzleri)).